The sequence spans 122 residues: Fluoride-specific ion channel FluC (122 aa).

The next 4 membrane-spanning stretches (helical) occupy residues 4–24 (LLIA…GTAI), 34–54 (IGTM…MTLL), 66–86 (LALV…EWET), and 95–115 (FWIG…AVWF). Residues G74 and T77 each coordinate Na(+).

This sequence belongs to the fluoride channel Fluc/FEX (TC 1.A.43) family.

The protein localises to the cell inner membrane. The catalysed reaction is fluoride(in) = fluoride(out). With respect to regulation, na(+) is not transported, but it plays an essential structural role and its presence is essential for fluoride channel function. Functionally, fluoride-specific ion channel. Important for reducing fluoride concentration in the cell, thus reducing its toxicity. The protein is Fluoride-specific ion channel FluC of Solibacter usitatus (strain Ellin6076).